A 419-amino-acid chain; its full sequence is MIDLKFLRDNPDVVRTSQITRGEDPALVDELLSADEARRQAIQVADELRSEQKAFGKKIGQASPEDRPALLEGSNELKAKVKEAEAAQETAEQRVHDLQMKLSNVVEGAPAGGEDDFVVLEHVGEPRTFDFEPKDHLELGESLGLIDMKRGTKVSGARFYYLTGDGAMLQLGMLTLAAQKATAAGFTMMIPPVLVRPEIMAGTGFLGDHSEEIYYLERDDMYLVGTSEVALAGYHKDEIIDLNNGPVKYAGWSSCFRREAGSYGKDTRGILRVHQFDKVEMFVYCKPEEAEEQHRRLLEMEKDMLAAVEVPYRIIDVAGGDLGASAARKFDTEAWVPTQGTYRELTSTSNCTTFQGRRLQTRYRDENGKPQIAATLNGTLATTRWLVAILENNQQADGSVIVPEALRPFVGKDVLEPVK.

An L-serine-binding site is contributed by 226–228 (TSE). Residues 257–259 (RRE) and V273 each bind ATP. Position 280 (E280) interacts with L-serine. 344-347 (ELTS) serves as a coordination point for ATP. T379 is an L-serine binding site.

This sequence belongs to the class-II aminoacyl-tRNA synthetase family. Type-1 seryl-tRNA synthetase subfamily. In terms of assembly, homodimer. The tRNA molecule binds across the dimer.

The protein localises to the cytoplasm. It carries out the reaction tRNA(Ser) + L-serine + ATP = L-seryl-tRNA(Ser) + AMP + diphosphate + H(+). The enzyme catalyses tRNA(Sec) + L-serine + ATP = L-seryl-tRNA(Sec) + AMP + diphosphate + H(+). Its pathway is aminoacyl-tRNA biosynthesis; selenocysteinyl-tRNA(Sec) biosynthesis; L-seryl-tRNA(Sec) from L-serine and tRNA(Sec): step 1/1. Functionally, catalyzes the attachment of serine to tRNA(Ser). Is also able to aminoacylate tRNA(Sec) with serine, to form the misacylated tRNA L-seryl-tRNA(Sec), which will be further converted into selenocysteinyl-tRNA(Sec). The protein is Serine--tRNA ligase of Corynebacterium efficiens (strain DSM 44549 / YS-314 / AJ 12310 / JCM 11189 / NBRC 100395).